Here is a 401-residue protein sequence, read N- to C-terminus: Exodeoxyribonuclease 7 large subunit (401 aa).

Belongs to the XseA family. Heterooligomer composed of large and small subunits.

The protein resides in the cytoplasm. It carries out the reaction Exonucleolytic cleavage in either 5'- to 3'- or 3'- to 5'-direction to yield nucleoside 5'-phosphates.. Its function is as follows. Bidirectionally degrades single-stranded DNA into large acid-insoluble oligonucleotides, which are then degraded further into small acid-soluble oligonucleotides. This Thermoanaerobacter sp. (strain X514) protein is Exodeoxyribonuclease 7 large subunit.